We begin with the raw amino-acid sequence, 426 residues long: Endothelin-1 receptor (426 aa).

An N-terminal signal peptide occupies residues 1–20 (MGVLCFLASFWLALVGGAIA). Residues 21–80 (DNAERYSANLSSHVEDFTPFPGTEFNFLGTTLQPPNLALPSNGSMHGYCPQQTKITTAFK) lie on the Extracellular side of the membrane. Residues Asn29 and Asn62 are each glycosylated (N-linked (GlcNAc...) asparagine). The helical transmembrane segment at 81–102 (YINTVISCTIFIVGMVGNATLL) threads the bilayer. The Cytoplasmic segment spans residues 103-112 (RIIYQNKCMR). A helical transmembrane segment spans residues 113–132 (NGPNALIASLALGDLIYVVI). Topologically, residues 133–159 (DLPINVFKLLAGRWPFDHNDFGVFLCK) are extracellular. Cysteines 158 and 239 form a disulfide. Residues 160 to 181 (LFPFLQKSSVGITVLNLCALSV) form a helical membrane-spanning segment. The Cytoplasmic portion of the chain corresponds to 182–205 (DRYRAVASWSRVQGIGIPLITAIE). Residues 206-229 (IVSIWILSFILAIPEAIGFVMVPF) form a helical membrane-spanning segment. Over 230-256 (EYKGEQHRTCMLNATTKFMEFYQDVKD) the chain is Extracellular. A helical membrane pass occupies residues 257 to 278 (WWLFGFYFCMPLVCTAIFYTLM). Over 279-306 (TCEMLNRRNGSLRIALSEHLKQRREVAK) the chain is Cytoplasmic. Residues 307–328 (TVFCLVVIFALCWFPLHLSRIL) form a helical membrane-spanning segment. At 329 to 347 (KKTVYDEMDKNRCELLSFL) the chain is on the extracellular side. A helical membrane pass occupies residues 348 to 372 (LLMDYIGINLATMNSCINPIALYFV). At 373 to 426 (SKKFKNCFQSCLCCCCHQSKSLMTSVPMNGTSIQWKNQEQNHNTERSSHKDSMN) the chain is on the cytoplasmic side. At Ser424 the chain carries Phosphoserine.

The protein belongs to the G-protein coupled receptor 1 family. Endothelin receptor subfamily. EDNRA sub-subfamily. In terms of assembly, interacts with HDAC7 and KAT5. In terms of tissue distribution, predominantly expressed in vascular smooth muscle cells of a variety of issues, bronchial smooth muscle cells, myocardium, and the pituitary gland.

It localises to the cell membrane. Its function is as follows. Receptor for endothelin-1. Mediates its action by association with G proteins that activate a phosphatidylinositol-calcium second messenger system. The rank order of binding affinities for ET-A is: ET1 &gt; ET2 &gt;&gt; ET3. In Rattus norvegicus (Rat), this protein is Endothelin-1 receptor.